A 151-amino-acid polypeptide reads, in one-letter code: Molybdopterin synthase catalytic subunit (151 aa).

Substrate-binding positions include 38–40, 104–105, Lys120, and 127–129; these read KVR, HR, and KRE.

This sequence belongs to the MoaE family. As to quaternary structure, heterotetramer of 2 MoaD subunits and 2 MoaE subunits. Also stable as homodimer. The enzyme changes between these two forms during catalysis.

It catalyses the reaction 2 [molybdopterin-synthase sulfur-carrier protein]-C-terminal-Gly-aminoethanethioate + cyclic pyranopterin phosphate + H2O = molybdopterin + 2 [molybdopterin-synthase sulfur-carrier protein]-C-terminal Gly-Gly + 2 H(+). The protein operates within cofactor biosynthesis; molybdopterin biosynthesis. Converts molybdopterin precursor Z into molybdopterin. This requires the incorporation of two sulfur atoms into precursor Z to generate a dithiolene group. The sulfur is provided by MoaD. In Yersinia pestis, this protein is Molybdopterin synthase catalytic subunit (moaE).